A 393-amino-acid polypeptide reads, in one-letter code: tRNA(Met) cytidine acetate ligase (393 aa).

3 residues coordinate ATP: Gly81, Asn142, and Arg167.

Belongs to the TmcAL family.

Its subcellular location is the cytoplasm. The enzyme catalyses cytidine(34) in elongator tRNA(Met) + acetate + ATP = N(4)-acetylcytidine(34) in elongator tRNA(Met) + AMP + diphosphate. Functionally, catalyzes the formation of N(4)-acetylcytidine (ac(4)C) at the wobble position of elongator tRNA(Met), using acetate and ATP as substrates. First activates an acetate ion to form acetyladenylate (Ac-AMP) and then transfers the acetyl group to tRNA to form ac(4)C34. The sequence is that of tRNA(Met) cytidine acetate ligase from Bacillus cereus (strain ZK / E33L).